We begin with the raw amino-acid sequence, 508 residues long: Ankyrin repeat domain-containing protein 34B (508 aa).

ANK repeat units follow at residues 9–38 (TDGN…YINE), 42–79 (RGET…DPNI), 83–113 (SGKS…DLSL), and 117–146 (SGYS…AKGK). The disordered stretch occupies residues 157–185 (PSGRHTTQHHLNMPPADMDGSHPPATPSE). Ser-260 carries the phosphoserine modification. A Phosphothreonine modification is found at Thr-269. Ser-293 carries the phosphoserine modification. Residues 361–370 (GANHYSSDSQ) are compositionally biased toward polar residues. The disordered stretch occupies residues 361–380 (GANHYSSDSQLAEGVTPPTV).

It belongs to the ANKRD34 family. Phosphorylated. As to expression, specifically and constitutively expressed in brain (at protein level).

Its subcellular location is the cytoplasm. The protein localises to the nucleus. The polypeptide is Ankyrin repeat domain-containing protein 34B (Ankrd34b) (Mus musculus (Mouse)).